We begin with the raw amino-acid sequence, 310 residues long: Tagatose-6-phosphate kinase (310 aa).

This sequence belongs to the carbohydrate kinase PfkB family. LacC subfamily.

It catalyses the reaction D-tagatofuranose 6-phosphate + ATP = D-tagatofuranose 1,6-bisphosphate + ADP + H(+). The protein operates within carbohydrate metabolism; D-tagatose 6-phosphate degradation; D-glyceraldehyde 3-phosphate and glycerone phosphate from D-tagatose 6-phosphate: step 1/2. The polypeptide is Tagatose-6-phosphate kinase (Staphylococcus epidermidis (strain ATCC 35984 / DSM 28319 / BCRC 17069 / CCUG 31568 / BM 3577 / RP62A)).